Here is an 856-residue protein sequence, read N- to C-terminus: Serine/threonine-protein kinase unc-51 (856 aa).

In terms of domain architecture, Protein kinase spans 9 to 275 (YSKRDLLGHG…FEDFFNHPFL (267 aa)). ATP is bound by residues 15–23 (LGHGAFAIV) and Lys-39. Asp-134 (proton acceptor) is an active-site residue. The disordered stretch occupies residues 304–327 (PQSSLPVPKRAGSTKLDSPTPVRR). Positions 358–361 (FTFL) match the LIR motif. Disordered regions lie at residues 362-391 (PPRQ…PVPV), 405-471 (LAAA…ERMT), and 520-582 (PTTT…PTEP). The segment covering 365 to 385 (QESSPVKQVQVHTNVSPSLTT) has biased composition (polar residues). The span at 411 to 436 (TAVPSSSSPTGSAVSAQHQHQHQQQQ) shows a compositional bias: low complexity. Polar residues-rich tracts occupy residues 527–536 (IPKSATTANI) and 566–578 (KYQQ…SPTA). The segment at 750–856 (YHQCLVRSQE…RQGFVAAVNT (107 aa)) is required for interaction with unc-14 and vab-8.

The protein belongs to the protein kinase superfamily. Ser/Thr protein kinase family. APG1/unc-51/ULK1 subfamily. Interacts with unc-14 and vab-8. Interacts (via C-terminus) with atg-13. Interacts (via the LIR motif) with lgg-1; the interaction is direct. Mg(2+) serves as cofactor.

The enzyme catalyses L-seryl-[protein] + ATP = O-phospho-L-seryl-[protein] + ADP + H(+). The catalysed reaction is L-threonyl-[protein] + ATP = O-phospho-L-threonyl-[protein] + ADP + H(+). Functionally, protein kinase important for axonal elongation and axonal guidance. Functions in the CAN axons to direct both anterior and posterior migrations. Phosphorylates both unc-14 and vab-8. Component of the unc-51/atg-13 complex that is probably recruited by lgg-1 to preautophagosomes and is required for autophagosome formation. Interaction with autophagy related proteins such as atg-13 links it to the autophagy machinery to in turn promote P-granule degradation in somatic cells. Plays a role in mitophagy during limited food availability. Regulates cell size. Plays a role in male tail ray pattern formation. May be required for normal dauer morphogenesis. The polypeptide is Serine/threonine-protein kinase unc-51 (Caenorhabditis elegans).